Consider the following 163-residue polypeptide: Transcription elongation factor GreB (163 aa).

Positions 54 to 76 form a coiled coil; it reads GKRRMREIDRRIRFLTKRLEAAV.

The protein belongs to the GreA/GreB family. GreB subfamily.

In terms of biological role, necessary for efficient RNA polymerase transcription elongation past template-encoded arresting sites. The arresting sites in DNA have the property of trapping a certain fraction of elongating RNA polymerases that pass through, resulting in locked ternary complexes. Cleavage of the nascent transcript by cleavage factors such as GreA or GreB allows the resumption of elongation from the new 3'terminus. GreB releases sequences of up to 9 nucleotides in length. The polypeptide is Transcription elongation factor GreB (Neisseria meningitidis serogroup A / serotype 4A (strain DSM 15465 / Z2491)).